Reading from the N-terminus, the 141-residue chain is Nucleoside diphosphate kinase (141 aa).

ATP is bound by residues Lys11, Phe59, Arg87, Thr93, Arg104, and Asn114. The active-site Pros-phosphohistidine intermediate is the His117.

It belongs to the NDK family. In terms of assembly, homotetramer. Mg(2+) is required as a cofactor.

It is found in the cytoplasm. It carries out the reaction a 2'-deoxyribonucleoside 5'-diphosphate + ATP = a 2'-deoxyribonucleoside 5'-triphosphate + ADP. The enzyme catalyses a ribonucleoside 5'-diphosphate + ATP = a ribonucleoside 5'-triphosphate + ADP. Functionally, major role in the synthesis of nucleoside triphosphates other than ATP. The ATP gamma phosphate is transferred to the NDP beta phosphate via a ping-pong mechanism, using a phosphorylated active-site intermediate. This Haemophilus influenzae (strain ATCC 51907 / DSM 11121 / KW20 / Rd) protein is Nucleoside diphosphate kinase.